The primary structure comprises 331 residues: Cathepsin S (331 aa).

The signal sequence occupies residues 1 to 16 (MNWLVWALLLCSSAMA). A propeptide spans 17–114 (HVHRDPTLDH…VTYKSDPNQK (98 aa)) (activation peptide). Residue N104 is glycosylated (N-linked (GlcNAc...) asparagine). 4 cysteine pairs are disulfide-bonded: C126/C224, C136/C180, C170/C213, and C272/C320. The active site involves C139. Residues H278 and N298 contribute to the active site.

It belongs to the peptidase C1 family. In terms of assembly, monomer.

It localises to the lysosome. The protein resides in the secreted. The protein localises to the cytoplasmic vesicle. It is found in the phagosome. It carries out the reaction Similar to cathepsin L, but with much less activity on Z-Phe-Arg-|-NHMec, and more activity on the Z-Val-Val-Arg-|-Xaa compound.. In terms of biological role, thiol protease. Key protease responsible for the removal of the invariant chain from MHC class II molecules and MHC class II antigen presentation. The bond-specificity of this proteinase is in part similar to the specificities of cathepsin L. This chain is Cathepsin S (CTSS), found in Bos taurus (Bovine).